The chain runs to 162 residues: Nucleotide-binding protein Francci3_0558 (162 aa).

The protein belongs to the YajQ family.

Its function is as follows. Nucleotide-binding protein. The sequence is that of Nucleotide-binding protein Francci3_0558 from Frankia casuarinae (strain DSM 45818 / CECT 9043 / HFP020203 / CcI3).